Here is a 619-residue protein sequence, read N- to C-terminus: Dihydroxy-acid dehydratase 1 (619 aa).

Asp81 provides a ligand contact to Mg(2+). A [2Fe-2S] cluster-binding site is contributed by Cys122. Positions 123 and 124 each coordinate Mg(2+). At Lys124 the chain carries N6-carboxylysine. A [2Fe-2S] cluster-binding site is contributed by Cys201. Position 496 (Glu496) interacts with Mg(2+). Catalysis depends on Ser522, which acts as the Proton acceptor.

This sequence belongs to the IlvD/Edd family. In terms of assembly, homodimer. [2Fe-2S] cluster is required as a cofactor. Requires Mg(2+) as cofactor.

The catalysed reaction is (2R)-2,3-dihydroxy-3-methylbutanoate = 3-methyl-2-oxobutanoate + H2O. It carries out the reaction (2R,3R)-2,3-dihydroxy-3-methylpentanoate = (S)-3-methyl-2-oxopentanoate + H2O. The protein operates within amino-acid biosynthesis; L-isoleucine biosynthesis; L-isoleucine from 2-oxobutanoate: step 3/4. It functions in the pathway amino-acid biosynthesis; L-valine biosynthesis; L-valine from pyruvate: step 3/4. In terms of biological role, functions in the biosynthesis of branched-chain amino acids. Catalyzes the dehydration of (2R,3R)-2,3-dihydroxy-3-methylpentanoate (2,3-dihydroxy-3-methylvalerate) into 2-oxo-3-methylpentanoate (2-oxo-3-methylvalerate) and of (2R)-2,3-dihydroxy-3-methylbutanoate (2,3-dihydroxyisovalerate) into 2-oxo-3-methylbutanoate (2-oxoisovalerate), the penultimate precursor to L-isoleucine and L-valine, respectively. This chain is Dihydroxy-acid dehydratase 1, found in Burkholderia lata (strain ATCC 17760 / DSM 23089 / LMG 22485 / NCIMB 9086 / R18194 / 383).